Consider the following 554-residue polypeptide: Valerianol synthase TPS1B (554 aa).

D307 and D311 together coordinate Mg(2+). The short motif at V326–D330 is the DDXXD motif element. The Mg(2+) site is built by D452, S456, and E460.

Belongs to the terpene synthase family. Requires Mg(2+) as cofactor.

It carries out the reaction (2E,6E)-farnesyl diphosphate + H2O = valerianol + diphosphate. The protein operates within secondary metabolite biosynthesis; terpenoid biosynthesis. Functionally, terpene synthase that catalyzes the biosynthesis of the terpene valerianol, which is a volatile compound of floral scent. This Camellia hiemalis (Camellia) protein is Valerianol synthase TPS1B.